The following is a 356-amino-acid chain: tRNA pseudouridine synthase D (356 aa).

The active-site Nucleophile is D84. The region spanning 159 to 302 (GVPNYYGPQR…RRGARRPIRV (144 aa)) is the TRUD domain.

It belongs to the pseudouridine synthase TruD family.

It carries out the reaction uridine(13) in tRNA = pseudouridine(13) in tRNA. Functionally, responsible for synthesis of pseudouridine from uracil-13 in transfer RNAs. In Thermus thermophilus (strain ATCC 27634 / DSM 579 / HB8), this protein is tRNA pseudouridine synthase D.